Consider the following 605-residue polypeptide: MTIEKEIEGLIHKTNKDLLNENANKDSRVFPTQRDLMAGIVSKHIAKNMVPSFIMKAHESGIIHVHDIDYSPALPFTNCCLVDLKGMLENGFKLGNAQIETPKSIGVATAIMAQITAQVASHQYGGTTFANVDKVLSPYVKRTYAKHIEDAEKWQIADALNYAQSKTEKDVYDAFQAYEYEVNTLFSSNGQTPFVTITFGTGTDWTERMIQKAILKNRIKGLGRDGITPIFPKLVMFVEEGVNLYKDDPNYDIKQLALECASKRMYPDIISAKNNKAITGSSVPVSPMGCRSFLSVWKDSTGNEILDGRNNLGVVTLNLPRIALDSYIGTQFNEQKFVELFNERMDLCFEALMCRISSLKGVKATVAPILYQEGAFGVRLKPDDDIIELFKNGRSSVSLGYIGIHELNILVGRDIGREILTKMNAHLKQWTERTGFAFSLYSTPAENLCYRFCKLDTEKYGSVKDVTDKGWYTNSFHVSVEENITPFEKISREAPYHFIATGGHISYVELPDMKNNLKGLEAVWDYAAQHLDYFGVNMPVDKCFTCGSTHEMTPTENGFVCSICGETDPKKMNTIRRTCGYLGNPNERGFNLGKNKEIMHRVKHQ.

Residues His-64 and His-66 each contribute to the dCTP site. Residues His-64, His-66, Asp-67, Glu-100, and Lys-103 each contribute to the dGTP site. Residues Glu-100, Lys-103, Gln-114, Lys-146, and 445–448 each bind dCTP; that span reads AENL. The dATP site is built by Glu-100, Lys-103, Gln-114, and Lys-146. Position 100 (Glu-100) interacts with dTTP. The dTTP site is built by Gln-114 and Lys-146. 3 residues coordinate dGTP: Lys-146, Asn-447, and Leu-448. Residues 482–605 form the Glycine radical domain; the sequence is ENITPFEKIS…KEIMHRVKHQ (124 aa). Residues Cys-543, Cys-546, Cys-561, and Cys-564 each coordinate Zn(2+). Gly-580 is subject to Glycine radical.

It belongs to the anaerobic ribonucleoside-triphosphate reductase family. As to quaternary structure, homodimer. Forms a tetramer composed of two NrdD and two NrdG subunits.

The catalysed reaction is a ribonucleoside 5'-triphosphate + formate + H(+) = a 2'-deoxyribonucleoside 5'-triphosphate + CO2 + H2O. With respect to regulation, activated under anaerobic conditions by NrdG, a tightly associated activase. Activation involves the formation of a glycyl radical at Gly-580. Functionally, catalyzes the conversion of ribonucleotides into deoxyribonucleotides, which are required for DNA synthesis and repair. In Enterobacteria phage T4 (Bacteriophage T4), this protein is Anaerobic ribonucleoside-triphosphate reductase.